Here is a 120-residue protein sequence, read N- to C-terminus: Small ribosomal subunit protein bS6 (120 aa).

A compositionally biased stretch (polar residues) spans 97–112 (SNEPSPILKNQSTENT). A disordered region spans residues 97–120 (SNEPSPILKNQSTENTPVIDVTAN).

Belongs to the bacterial ribosomal protein bS6 family.

In terms of biological role, binds together with bS18 to 16S ribosomal RNA. The chain is Small ribosomal subunit protein bS6 from Rickettsia bellii (strain OSU 85-389).